The sequence spans 91 residues: Acylphosphatase (91 aa).

The Acylphosphatase-like domain maps to 3–91 (KLRMNVQGRV…EETEQFKVIQ (89 aa)). Active-site residues include R18 and N36.

It belongs to the acylphosphatase family.

The enzyme catalyses an acyl phosphate + H2O = a carboxylate + phosphate + H(+). The polypeptide is Acylphosphatase (acyP) (Enterococcus faecalis (strain ATCC 700802 / V583)).